The sequence spans 220 residues: MTKGILGRKIGMTQVFGENGELIPVTVVEASQNVVLQKKTEEVDGYNAIQVGFEDKQAYKKGSKSNKYANKPAEGHAKKADTAPKRFIREFRNVNVDEYELGQEVSVDTFETGDIIDVTGVSKGKGFQGAIKRHGQGRGPMAHGSHFHRAPGSVGMASDASKVFKGQKMPGRMGGNTVTVQNLEVVQVDTENSVILVKGNVPGPKKGLVEITTSIKKGNK.

The tract at residues 61 to 81 is disordered; it reads KGSKSNKYANKPAEGHAKKAD.

This sequence belongs to the universal ribosomal protein uL3 family. As to quaternary structure, part of the 50S ribosomal subunit. Forms a cluster with proteins L14 and L19.

In terms of biological role, one of the primary rRNA binding proteins, it binds directly near the 3'-end of the 23S rRNA, where it nucleates assembly of the 50S subunit. This Staphylococcus epidermidis (strain ATCC 12228 / FDA PCI 1200) protein is Large ribosomal subunit protein uL3.